An 836-amino-acid polypeptide reads, in one-letter code: V-type proton ATPase subunit C (836 aa).

A compositionally biased stretch (basic residues) spans 116–144 (LSLRHQRKHQHTHHQNKPQHYHHHHHHHQ). 4 disordered regions span residues 116–169 (LSLR…ASAP), 302–403 (APTT…SVQS), 415–453 (KPKR…QNHN), and 496–544 (PSQL…PLSP). The span at 160–169 (ATPPAPASAP) shows a compositional bias: pro residues. Residues 302–316 (APTTSSSVHSSMSRS) show a composition bias toward low complexity. Composition is skewed to polar residues over residues 319-348 (KRLN…HLAT) and 364-374 (TNPLQSPVQKS). The segment covering 425-450 (AQQQHETAQLQHQQTTQQHATPLTPQ) has biased composition (low complexity). Polar residues predominate over residues 496 to 511 (PSQLNINNGFNLTPTH). Positions 512-529 (RSSPVSSCCGSSSQGRSS) are enriched in low complexity.

Belongs to the V-ATPase C subunit family. V-ATPase is a heteromultimeric enzyme made up of two complexes: the ATP-hydrolytic V1 complex and the proton translocation V0 complex. The V1 complex consists of three catalytic AB heterodimers that form a heterohexamer, three peripheral stalks each consisting of EG heterodimers, one central rotor including subunits D and F, and the regulatory subunits C and H. The proton translocation complex V0 consists of the proton transport subunit a, a ring of proteolipid subunits c9c'', rotary subunit d, subunits e and f, and the accessory subunits VhaAC45 and ATP6AP2. As to expression, in larvae, expressed in the ring gland, CNS, imaginal disks and lymph gland.

Subunit of the V1 complex of vacuolar(H+)-ATPase (V-ATPase), a multisubunit enzyme composed of a peripheral complex (V1) that hydrolyzes ATP and a membrane integral complex (V0) that translocates protons. V-ATPase is responsible for acidifying and maintaining the pH of intracellular compartments and in some cell types, is targeted to the plasma membrane, where it is responsible for acidifying the extracellular environment. Subunit C is necessary for the assembly of the catalytic sector of the enzyme and is likely to have a specific function in its catalytic activity. In enterocytes, acts as part of a pHCl-2 sensory pathway which mediates Tor-dependent larval growth and metabolism in response to zinc availability. Likely acts in maintaining enterocyte lysosomal acidification which consequently promotes Tor activation at the lysosome membrane. The protein is V-type proton ATPase subunit C (Vha44) of Drosophila melanogaster (Fruit fly).